The sequence spans 382 residues: Mannitol-1-phosphate 5-dehydrogenase (382 aa).

3-14 (AVHFGAGNIGRG) is an NAD(+) binding site.

This sequence belongs to the mannitol dehydrogenase family.

The enzyme catalyses D-mannitol 1-phosphate + NAD(+) = beta-D-fructose 6-phosphate + NADH + H(+). This chain is Mannitol-1-phosphate 5-dehydrogenase, found in Aliivibrio salmonicida (strain LFI1238) (Vibrio salmonicida (strain LFI1238)).